A 487-amino-acid polypeptide reads, in one-letter code: Argininosuccinate lyase (487 aa).

It belongs to the lyase 1 family. Argininosuccinate lyase subfamily.

It localises to the cytoplasm. It catalyses the reaction 2-(N(omega)-L-arginino)succinate = fumarate + L-arginine. The protein operates within amino-acid biosynthesis; L-arginine biosynthesis; L-arginine from L-ornithine and carbamoyl phosphate: step 3/3. The protein is Argininosuccinate lyase of Natranaerobius thermophilus (strain ATCC BAA-1301 / DSM 18059 / JW/NM-WN-LF).